The sequence spans 644 residues: Core protein VP4 (644 aa).

Belongs to the orbivirus VP4 family.

It localises to the virion. In terms of biological role, the VP4 protein is one of the five proteins (with VP1, VP3, VP6 and VP7) which form the inner capsid of the virus. The sequence is that of Core protein VP4 (Segment-4) from Bluetongue virus 13 (isolate USA) (BTV 13).